We begin with the raw amino-acid sequence, 268 residues long: Ribosomal RNA small subunit methyltransferase A (268 aa).

S-adenosyl-L-methionine contacts are provided by N12, L14, G38, E59, D82, and N107.

It belongs to the class I-like SAM-binding methyltransferase superfamily. rRNA adenine N(6)-methyltransferase family. RsmA subfamily.

It localises to the cytoplasm. The enzyme catalyses adenosine(1518)/adenosine(1519) in 16S rRNA + 4 S-adenosyl-L-methionine = N(6)-dimethyladenosine(1518)/N(6)-dimethyladenosine(1519) in 16S rRNA + 4 S-adenosyl-L-homocysteine + 4 H(+). In terms of biological role, specifically dimethylates two adjacent adenosines (A1518 and A1519) in the loop of a conserved hairpin near the 3'-end of 16S rRNA in the 30S particle. May play a critical role in biogenesis of 30S subunits. The protein is Ribosomal RNA small subunit methyltransferase A of Onion yellows phytoplasma (strain OY-M).